Consider the following 444-residue polypeptide: Tubulin gamma chain (444 aa).

A GTP-binding site is contributed by 144–150; the sequence is SGGTGSG.

The protein belongs to the tubulin family.

The protein localises to the cytoplasm. It localises to the cytoskeleton. The protein resides in the microtubule organizing center. Its subcellular location is the centrosome. It is found in the cell junction. The protein localises to the hemidesmosome. It localises to the adherens junction. In terms of biological role, tubulin is the major constituent of microtubules. The gamma chain is found at microtubule organizing centers (MTOC) such as the spindle poles or the centrosome, suggesting that it is involved in the minus-end nucleation of microtubule assembly. This Caenorhabditis elegans protein is Tubulin gamma chain (tbg-1).